The chain runs to 198 residues: 7-methyl-GTP pyrophosphatase (198 aa).

Catalysis depends on aspartate 75, which acts as the Proton acceptor.

It belongs to the Maf family. YceF subfamily. A divalent metal cation is required as a cofactor.

The protein localises to the cytoplasm. The enzyme catalyses N(7)-methyl-GTP + H2O = N(7)-methyl-GMP + diphosphate + H(+). Nucleoside triphosphate pyrophosphatase that hydrolyzes 7-methyl-GTP (m(7)GTP). May have a dual role in cell division arrest and in preventing the incorporation of modified nucleotides into cellular nucleic acids. This chain is 7-methyl-GTP pyrophosphatase, found in Bartonella henselae (strain ATCC 49882 / DSM 28221 / CCUG 30454 / Houston 1) (Rochalimaea henselae).